A 208-amino-acid chain; its full sequence is Small ribosomal subunit protein eS8 (208 aa).

The segment at 1–23 (MGISRDSAHKRRATGGKRKSLRK) is disordered. Over residues 8-23 (AHKRRATGGKRKSLRK) the composition is skewed to basic residues.

The protein belongs to the eukaryotic ribosomal protein eS8 family. In terms of assembly, component of the small ribosomal subunit. Identified in a IGF2BP1-dependent mRNP granule complex containing untranslated mRNAs. Part of the small subunit (SSU) processome, composed of more than 70 proteins and the RNA chaperone small nucleolar RNA (snoRNA) U3.

The protein resides in the cytoplasm. The protein localises to the membrane. It localises to the nucleus. Its subcellular location is the nucleolus. Component of the small ribosomal subunit. The ribosome is a large ribonucleoprotein complex responsible for the synthesis of proteins in the cell. Part of the small subunit (SSU) processome, first precursor of the small eukaryotic ribosomal subunit. During the assembly of the SSU processome in the nucleolus, many ribosome biogenesis factors, an RNA chaperone and ribosomal proteins associate with the nascent pre-rRNA and work in concert to generate RNA folding, modifications, rearrangements and cleavage as well as targeted degradation of pre-ribosomal RNA by the RNA exosome. This is Small ribosomal subunit protein eS8 (RpS8) from Drosophila melanogaster (Fruit fly).